Reading from the N-terminus, the 115-residue chain is Disintegrin EC6 subunit alpha (115 aa).

The N-terminal stretch at 1 to 20 is a signal peptide; it reads MIQVLLVIICLAVFPYQGSS. Positions 21-47 are excised as a propeptide; the sequence is IILESGNINDYEIVYPKKVAVLPTGAM. Residues 48-112 form the Disintegrin domain; sequence NSVHPCCDPV…DCPRNRYKGK (65 aa). Disulfide bonds link C53/C76, C67/C73, C72/C97, and C85/C104. A Cell attachment site; atypical (MLD) motif is present at residues 89–91; that stretch reads MLD.

It belongs to the disintegrin family. Dimeric disintegrin subfamily. Heterodimer with subunit beta; disulfide-linked. As to expression, expressed by the venom gland.

It localises to the secreted. Functionally, potently inhibits adhesion of alpha-4/beta-1 (ITGA4/ITGB1) and alpha-9/beta-1 (ITGA9/ITGB1) integrins to VCAM1, and adhesion of alpha-5/beta-1 (ITGA5/ITGB1) integrin to fibronectin. Has a much less effect on alpha-IIb/beta-3 (ITGA2B/ITGB3) integrin. Also potently inhibits neutrophil migration across TNF-alpha-activated human umbilical endothelial cells. The chain is Disintegrin EC6 subunit alpha from Echis carinatus sochureki (Saw-scaled viper).